A 173-amino-acid chain; its full sequence is Co-chaperone protein HscB homolog (173 aa).

In terms of domain architecture, J spans 5 to 77 (CHYALFDLQP…PRRARYLLAI (73 aa)).

It belongs to the HscB family. In terms of assembly, interacts with HscA and stimulates its ATPase activity.

In terms of biological role, co-chaperone involved in the maturation of iron-sulfur cluster-containing proteins. Seems to help targeting proteins to be folded toward HscA. This is Co-chaperone protein HscB homolog from Pseudomonas putida (strain ATCC 700007 / DSM 6899 / JCM 31910 / BCRC 17059 / LMG 24140 / F1).